The following is a 134-amino-acid chain: Transcription antitermination protein NusB (134 aa).

The protein belongs to the NusB family.

Its function is as follows. Involved in transcription antitermination. Required for transcription of ribosomal RNA (rRNA) genes. Binds specifically to the boxA antiterminator sequence of the ribosomal RNA (rrn) operons. This chain is Transcription antitermination protein NusB, found in Shewanella frigidimarina (strain NCIMB 400).